Reading from the N-terminus, the 276-residue chain is Rhomboid protease GlpG (276 aa).

Transmembrane regions (helical) follow at residues 94–114 (GPVT…MQIL), 142–162 (ALMH…WYLG), 169–189 (LGSG…GYVQ), 192–212 (FSGP…GYVW), 229–249 (LIIF…GMSM), and 250–270 (ANGA…VDSL). The Nucleophile role is filled by Ser201. The active site involves His254.

This sequence belongs to the peptidase S54 family.

It localises to the cell inner membrane. The enzyme catalyses Cleaves type-1 transmembrane domains using a catalytic dyad composed of serine and histidine that are contributed by different transmembrane domains.. Functionally, rhomboid-type serine protease that catalyzes intramembrane proteolysis. The protein is Rhomboid protease GlpG of Escherichia coli O157:H7.